The sequence spans 372 residues: tRNA-specific 2-thiouridylase MnmA (372 aa).

Residues 13 to 20 (GMSGGVDS) and Met39 contribute to the ATP site. The tract at residues 99-101 (NPD) is interaction with target base in tRNA. Catalysis depends on Cys104, which acts as the Nucleophile. A disulfide bridge connects residues Cys104 and Cys200. Position 128 (Gly128) interacts with ATP. The segment at 150–152 (KDQ) is interaction with tRNA. The Cysteine persulfide intermediate role is filled by Cys200. Positions 310–311 (RY) are interaction with tRNA.

Belongs to the MnmA/TRMU family.

The protein resides in the cytoplasm. It carries out the reaction S-sulfanyl-L-cysteinyl-[protein] + uridine(34) in tRNA + AH2 + ATP = 2-thiouridine(34) in tRNA + L-cysteinyl-[protein] + A + AMP + diphosphate + H(+). In terms of biological role, catalyzes the 2-thiolation of uridine at the wobble position (U34) of tRNA, leading to the formation of s(2)U34. This chain is tRNA-specific 2-thiouridylase MnmA, found in Bacillus licheniformis (strain ATCC 14580 / DSM 13 / JCM 2505 / CCUG 7422 / NBRC 12200 / NCIMB 9375 / NCTC 10341 / NRRL NRS-1264 / Gibson 46).